The sequence spans 335 residues: Tetraacyldisaccharide 4'-kinase (335 aa).

Residue 62-69 (NVGGTGKT) coordinates ATP.

This sequence belongs to the LpxK family.

It catalyses the reaction a lipid A disaccharide + ATP = a lipid IVA + ADP + H(+). It participates in glycolipid biosynthesis; lipid IV(A) biosynthesis; lipid IV(A) from (3R)-3-hydroxytetradecanoyl-[acyl-carrier-protein] and UDP-N-acetyl-alpha-D-glucosamine: step 6/6. In terms of biological role, transfers the gamma-phosphate of ATP to the 4'-position of a tetraacyldisaccharide 1-phosphate intermediate (termed DS-1-P) to form tetraacyldisaccharide 1,4'-bis-phosphate (lipid IVA). This Methylobacillus flagellatus (strain ATCC 51484 / DSM 6875 / VKM B-1610 / KT) protein is Tetraacyldisaccharide 4'-kinase.